We begin with the raw amino-acid sequence, 84 residues long: Small ribosomal subunit protein uS17 (84 aa).

It belongs to the universal ribosomal protein uS17 family. As to quaternary structure, part of the 30S ribosomal subunit.

In terms of biological role, one of the primary rRNA binding proteins, it binds specifically to the 5'-end of 16S ribosomal RNA. This is Small ribosomal subunit protein uS17 from Pectobacterium atrosepticum (strain SCRI 1043 / ATCC BAA-672) (Erwinia carotovora subsp. atroseptica).